A 315-amino-acid chain; its full sequence is Three-prime repair exonuclease 1 (315 aa).

D18 and E20 together coordinate Mg(2+). Substrate is bound at residue 20–21; that stretch reads EA. Position 78 is a phosphoserine (S78). Y129 contacts substrate. A Phosphoserine modification is found at S167. H195 functions as the Proton donor/acceptor in the catalytic mechanism. D200 contributes to the Mg(2+) binding site. D200 is a substrate binding site. The segment at 236–315 is necessary for endoplasmic reticulum localization; sequence TTSTGTNPRP…YGLSLAMPGQ (80 aa). Residues 243 to 315 form an interaction with UBQLN1 region; that stretch reads PRPSAVTATV…YGLSLAMPGQ (73 aa). The disordered stretch occupies residues 256–282; sequence RASDTGPNLRGDRSPKPAPSPKMCPGA. Positions 271 to 282 are enriched in pro residues; sequence KPAPSPKMCPGA. Residues 282–315 are necessary for cytoplasmic retention; sequence APPGEGLLAPLGLLAFLTLAVAMLYGLSLAMPGQ.

It belongs to the exonuclease superfamily. TREX family. In terms of assembly, homodimer. Interacts (via proline-rich region) with TCERG1/CA150 (via the second WW domain). Component of the SET complex, composed of at least ANP32A, APEX1, HMGB2, NME1, SET and TREX1. Within this complex, directly interacts with SET; this interaction does not result in TREX1 inhibition. Also interacts with NME1, but only following translocation to the nucleus. Directly interacts with UBQLN1 (via ubiquitin-like domain); the interaction may control TREX1 subcellular location. Requires Mg(2+) as cofactor. Post-translationally, ubiquitinated, but not targeted to proteasomal degradation. Ubiquitination may be important for interaction with UBQLN1.

It is found in the nucleus. Its subcellular location is the cytoplasm. It localises to the cytosol. The protein resides in the endoplasmic reticulum membrane. It carries out the reaction Exonucleolytic cleavage in the 3'- to 5'-direction to yield nucleoside 5'-phosphates.. Major cellular 3'-to-5' DNA exonuclease which digests single-stranded DNA (ssDNA) and double-stranded DNA (dsDNA) with mismatched 3' termini. Prevents cell-intrinsic initiation of autoimmunity. Acts by metabolizing DNA fragments from endogenous retroelements, including L1, LTR and SINE elements. Plays a key role in degradation of DNA fragments at cytosolic micronuclei arising from genome instability: its association with the endoplasmic reticulum membrane directs TREX1 to ruptured micronuclei, leading to micronuclear DNA degradation. Micronuclear DNA degradation is required to limit CGAS activation and subsequent inflammation. Unless degraded, these DNA fragments accumulate in the cytosol and activate the cGAS-STING innate immune signaling, leading to the production of type I interferon. Prevents chronic ATM-dependent checkpoint activation, by processing ssDNA polynucleotide species arising from the processing of aberrant DNA replication intermediates. Inefficiently degrades oxidized DNA, such as that generated upon antimicrobial reactive oxygen production or upon absorption of UV light. During GZMA-mediated cell death, contributes to DNA damage in concert with NME1. NME1 nicks one strand of DNA and TREX1 removes bases from the free 3' end to enhance DNA damage and prevent DNA end reannealing and rapid repair. This is Three-prime repair exonuclease 1 from Bos taurus (Bovine).